A 253-amino-acid polypeptide reads, in one-letter code: 5'/3'-nucleotidase SurE (253 aa).

A divalent metal cation is bound by residues Asp8, Asp9, Ser39, and Asn92.

This sequence belongs to the SurE nucleotidase family. A divalent metal cation serves as cofactor.

Its subcellular location is the cytoplasm. It catalyses the reaction a ribonucleoside 5'-phosphate + H2O = a ribonucleoside + phosphate. The enzyme catalyses a ribonucleoside 3'-phosphate + H2O = a ribonucleoside + phosphate. It carries out the reaction [phosphate](n) + H2O = [phosphate](n-1) + phosphate + H(+). Nucleotidase with a broad substrate specificity as it can dephosphorylate various ribo- and deoxyribonucleoside 5'-monophosphates and ribonucleoside 3'-monophosphates with highest affinity to 3'-AMP. Also hydrolyzes polyphosphate (exopolyphosphatase activity) with the preference for short-chain-length substrates (P20-25). Might be involved in the regulation of dNTP and NTP pools, and in the turnover of 3'-mononucleotides produced by numerous intracellular RNases (T1, T2, and F) during the degradation of various RNAs. This is 5'/3'-nucleotidase SurE from Shigella flexneri serotype 5b (strain 8401).